A 291-amino-acid chain; its full sequence is Urease accessory protein UreD (291 aa).

It belongs to the UreD family. In terms of assembly, ureD, UreF and UreG form a complex that acts as a GTP-hydrolysis-dependent molecular chaperone, activating the urease apoprotein by helping to assemble the nickel containing metallocenter of UreC. The UreE protein probably delivers the nickel.

The protein localises to the cytoplasm. In terms of biological role, required for maturation of urease via the functional incorporation of the urease nickel metallocenter. This is Urease accessory protein UreD from Acinetobacter baumannii (strain ACICU).